The sequence spans 338 residues: Mitochondrial E3 ubiquitin protein ligase 1 (338 aa).

The Cytoplasmic segment spans residues 1-3 (MEF). The chain crosses the membrane as a helical span at residues 4-24 (LHESVALGVDLLILGLCAREY). Residues 25–227 (VHYKRTAKVL…LIKRFEDAKT (203 aa)) are Mitochondrial intermembrane-facing. A helical membrane pass occupies residues 228 to 248 (TTILKLVVCSTISAILVAFIA). Residues 249–338 (KKLYRKRKQE…IVSKAAAFIA (90 aa)) lie on the Cytoplasmic side of the membrane. The segment at 290 to 326 (CVVCSTNPKEIILLPCGHVCLCEDCAQKISVTCPVCR) adopts an RING-type zinc-finger fold.

Interacts with Marf. In terms of processing, auto-ubiquitinated.

Its subcellular location is the mitochondrion outer membrane. The enzyme catalyses S-ubiquitinyl-[E2 ubiquitin-conjugating enzyme]-L-cysteine + [acceptor protein]-L-lysine = [E2 ubiquitin-conjugating enzyme]-L-cysteine + N(6)-ubiquitinyl-[acceptor protein]-L-lysine.. In terms of biological role, exhibits weak E3 ubiquitin-protein ligase activity. E3 ubiquitin ligases accept ubiquitin from an E2 ubiquitin-conjugating enzyme in the form of a thioester and then directly transfer the ubiquitin to targeted substrates. Plays a role in the control of mitochondrial morphology by promoting mitochondrial fission. Negatively regulates the mitochondrial fusion protein marf by promoting its ubiquitination, acting in a pathway that is parallel to the park/pink1 regulatory pathway. This is Mitochondrial E3 ubiquitin protein ligase 1 from Drosophila melanogaster (Fruit fly).